The chain runs to 113 residues: UPF0212 protein AF_0282 (113 aa).

This sequence belongs to the UPF0212 family.

The chain is UPF0212 protein AF_0282 from Archaeoglobus fulgidus (strain ATCC 49558 / DSM 4304 / JCM 9628 / NBRC 100126 / VC-16).